We begin with the raw amino-acid sequence, 512 residues long: Cytochrome P450 1A1 (512 aa).

The segment at 29 to 40 is mitochondrial targeting signal; it reads SRPRVPKGLKNP. Ser-67 is a glycosylation site (O-linked (GlcNAc) serine). Substrate is bound at residue Phe-224. Cys-457 contacts heme.

It belongs to the cytochrome P450 family. In terms of assembly, interacts with cytosolic chaperones HSP70 and HSP90; this interaction is required for initial targeting to mitochondria. Interacts (via mitochondrial targeting signal) with TOMM40 (via N-terminus); this interaction is required for translocation across the mitochondrial outer membrane. Requires heme as cofactor.

The protein resides in the endoplasmic reticulum membrane. It is found in the mitochondrion inner membrane. It localises to the microsome membrane. The protein localises to the cytoplasm. It catalyses the reaction an organic molecule + reduced [NADPH--hemoprotein reductase] + O2 = an alcohol + oxidized [NADPH--hemoprotein reductase] + H2O + H(+). The catalysed reaction is estrone + reduced [NADPH--hemoprotein reductase] + O2 = 2-hydroxyestrone + oxidized [NADPH--hemoprotein reductase] + H2O + H(+). It carries out the reaction estrone + reduced [NADPH--hemoprotein reductase] + O2 = 4-hydroxyestrone + oxidized [NADPH--hemoprotein reductase] + H2O + H(+). The enzyme catalyses estrone + reduced [NADPH--hemoprotein reductase] + O2 = 6alpha-hydroxyestrone + oxidized [NADPH--hemoprotein reductase] + H2O + H(+). It catalyses the reaction estrone + reduced [NADPH--hemoprotein reductase] + O2 = 15alpha-hydroxyestrone + oxidized [NADPH--hemoprotein reductase] + H2O + H(+). The catalysed reaction is estrone + reduced [NADPH--hemoprotein reductase] + O2 = 16alpha-hydroxyestrone + oxidized [NADPH--hemoprotein reductase] + H2O + H(+). It carries out the reaction 17beta-estradiol + reduced [NADPH--hemoprotein reductase] + O2 = 2-hydroxy-17beta-estradiol + oxidized [NADPH--hemoprotein reductase] + H2O + H(+). The enzyme catalyses 17beta-estradiol + reduced [NADPH--hemoprotein reductase] + O2 = 4-hydroxy-17beta-estradiol + oxidized [NADPH--hemoprotein reductase] + H2O + H(+). It catalyses the reaction 17beta-estradiol + reduced [NADPH--hemoprotein reductase] + O2 = 6alpha-hydroxy-17beta-estradiol + oxidized [NADPH--hemoprotein reductase] + H2O + H(+). The catalysed reaction is 17beta-estradiol + reduced [NADPH--hemoprotein reductase] + O2 = 7alpha-hydroxy-17beta-estradiol + oxidized [NADPH--hemoprotein reductase] + H2O + H(+). It carries out the reaction 17beta-estradiol + reduced [NADPH--hemoprotein reductase] + O2 = 15alpha-hydroxy-17beta-estradiol + oxidized [NADPH--hemoprotein reductase] + H2O + H(+). The enzyme catalyses (5Z,8Z,11Z)-eicosatrienoate + reduced [NADPH--hemoprotein reductase] + O2 = 19-hydroxy-(5Z,8Z,11Z)-eicosatrienoate + oxidized [NADPH--hemoprotein reductase] + H2O + H(+). It catalyses the reaction (5Z,8Z,11Z,14Z)-eicosatetraenoate + reduced [NADPH--hemoprotein reductase] + O2 = 16-hydroxy-(5Z,8Z,11Z,14Z)-eicosatetraenoate + oxidized [NADPH--hemoprotein reductase] + H2O + H(+). The catalysed reaction is (5Z,8Z,11Z,14Z)-eicosatetraenoate + reduced [NADPH--hemoprotein reductase] + O2 = 17-hydroxy-(5Z,8Z,11Z,14Z)-eicosatetraenoate + oxidized [NADPH--hemoprotein reductase] + H2O + H(+). It carries out the reaction (5Z,8Z,11Z,14Z)-eicosatetraenoate + reduced [NADPH--hemoprotein reductase] + O2 = 18-hydroxy-(5Z,8Z,11Z,14Z)-eicosatetraenoate + oxidized [NADPH--hemoprotein reductase] + H2O + H(+). The enzyme catalyses (5Z,8Z,11Z,14Z)-eicosatetraenoate + reduced [NADPH--hemoprotein reductase] + O2 = 19-hydroxy-(5Z,8Z,11Z,14Z)-eicosatetraenoate + oxidized [NADPH--hemoprotein reductase] + H2O + H(+). It catalyses the reaction (5Z,8Z,11Z,14Z,17Z)-eicosapentaenoate + reduced [NADPH--hemoprotein reductase] + O2 = 19-hydroxy-(5Z,8Z,11Z,14Z,17Z)-eicosapentaenoate + oxidized [NADPH--hemoprotein reductase] + H2O + H(+). The catalysed reaction is (5Z,8Z,11Z,14Z)-eicosatetraenoate + reduced [NADPH--hemoprotein reductase] + O2 = (8R,9S)-epoxy-(5Z,11Z,14Z)-eicosatrienoate + oxidized [NADPH--hemoprotein reductase] + H2O + H(+). It carries out the reaction (5Z,8Z,11Z,14Z)-eicosatetraenoate + reduced [NADPH--hemoprotein reductase] + O2 = (11R,12S)-epoxy-(5Z,8Z,14Z)-eicosatrienoate + oxidized [NADPH--hemoprotein reductase] + H2O + H(+). The enzyme catalyses (5Z,8Z,11Z,14Z)-eicosatetraenoate + reduced [NADPH--hemoprotein reductase] + O2 = (14S,15R)-epoxy-(5Z,8Z,11Z)-eicosatrienoate + oxidized [NADPH--hemoprotein reductase] + H2O + H(+). It catalyses the reaction (5Z,8Z,11Z,14Z)-eicosatetraenoate + reduced [NADPH--hemoprotein reductase] + O2 = (14R,15S)-epoxy-(5Z,8Z,11Z)-eicosatrienoate + oxidized [NADPH--hemoprotein reductase] + H2O + H(+). The catalysed reaction is (5Z,8Z,11Z,14Z,17Z)-eicosapentaenoate + reduced [NADPH--hemoprotein reductase] + O2 = (17R,18S)-epoxy-(5Z,8Z,11Z,14Z)-eicosatetraenoate + oxidized [NADPH--hemoprotein reductase] + H2O + H(+). It carries out the reaction (4Z,7Z,10Z,13Z,16Z,19Z)-docosahexaenoate + reduced [NADPH--hemoprotein reductase] + O2 = (19S,20R)-epoxy-(4Z,7Z,10Z,13Z,16Z)-docosapentaenoate + oxidized [NADPH--hemoprotein reductase] + H2O + H(+). The enzyme catalyses (4Z,7Z,10Z,13Z,16Z,19Z)-docosahexaenoate + reduced [NADPH--hemoprotein reductase] + O2 = (19R,20S)-epoxy-(4Z,7Z,10Z,13Z,16Z)-docosapentaenoate + oxidized [NADPH--hemoprotein reductase] + H2O + H(+). It catalyses the reaction all-trans-retinol + reduced [NADPH--hemoprotein reductase] + O2 = all-trans-retinal + oxidized [NADPH--hemoprotein reductase] + 2 H2O + H(+). The catalysed reaction is all-trans-retinal + reduced [NADPH--hemoprotein reductase] + O2 = all-trans-retinoate + oxidized [NADPH--hemoprotein reductase] + H2O + 2 H(+). It carries out the reaction (13S)-hydroperoxy-(9Z,11E)-octadecadienoate = 13-oxo-(9Z,11E)-octadecadienoate + H2O. The enzyme catalyses (12S)-hydroperoxy-(5Z,8Z,10E,14Z)-eicosatetraenoate = 12-oxo-(5Z,8Z,10E,14Z)-eicosatetraenoate + H2O. It catalyses the reaction (15S)-hydroperoxy-(5Z,8Z,11Z,13E)-eicosatetraenoate = 15-oxo-(5Z,8Z,11Z,13E)-eicosatetraenoate + H2O. The catalysed reaction is (5S)-hydroperoxy-(6E,8Z,11Z,14Z)-eicosatetraenoate = 5-oxo-(6E,8Z,11Z,14Z)-eicosatetraenoate + H2O. The protein operates within steroid hormone biosynthesis. It functions in the pathway lipid metabolism; fatty acid metabolism. It participates in cofactor metabolism; retinol metabolism. A cytochrome P450 monooxygenase involved in the metabolism of various endogenous substrates, including fatty acids, steroid hormones and vitamins. Mechanistically, uses molecular oxygen inserting one oxygen atom into a substrate, and reducing the second into a water molecule, with two electrons provided by NADPH via cytochrome P450 reductase (CPR; NADPH-ferrihemoprotein reductase). Catalyzes the hydroxylation of carbon-hydrogen bonds. Exhibits high catalytic activity for the formation of hydroxyestrogens from estrone (E1) and 17beta-estradiol (E2), namely 2-hydroxy E1 and E2, as well as D-ring hydroxylated E1 and E2 at the C15alpha and C16alpha positions. Displays different regioselectivities for polyunsaturated fatty acids (PUFA) hydroxylation. Catalyzes the epoxidation of double bonds of certain PUFA. Converts arachidonic acid toward epoxyeicosatrienoic acid (EET) regioisomers, 8,9-, 11,12-, and 14,15-EET, that function as lipid mediators in the vascular system. Displays an absolute stereoselectivity in the epoxidation of eicosapentaenoic acid (EPA) producing the 17(R),18(S) enantiomer. May play an important role in all-trans retinoic acid biosynthesis in extrahepatic tissues. Catalyzes two successive oxidative transformation of all-trans retinol to all-trans retinal and then to the active form all-trans retinoic acid. May also participate in eicosanoids metabolism by converting hydroperoxide species into oxo metabolites (lipoxygenase-like reaction, NADPH-independent). The polypeptide is Cytochrome P450 1A1 (CYP1A1) (Macaca mulatta (Rhesus macaque)).